The following is a 174-amino-acid chain: Protein VdlD (174 aa).

The HotDog ACOT-type domain maps to 20–132; the sequence is DRTKLLMSYL…YFTMVAVENG (113 aa).

The protein belongs to the acyl coenzyme A hydrolase family.

In Helicobacter pylori (strain J99 / ATCC 700824) (Campylobacter pylori J99), this protein is Protein VdlD (vdlD).